The chain runs to 909 residues: E3 ubiquitin-protein ligase HACE1 (909 aa).

An N-terminal helix important for homodimerization region spans residues 1-21 (MERAMEQLNRLTRSLRRARTV). ANK repeat units lie at residues 23-55 (LPDDNETAVYTLMPMVMADQHRSVSELLSNSKF), 64-93 (VKRSLLHIAANCGSVECLVLLLKKGANPNY), 97-126 (SGCTPLHLAARNGQKKCMSKLLEYSADVNI), 130-159 (EGLTAIHWLAVNGRTELLHDLVQHVSDVDV), 163-192 (MGQTALHVACQNGHKTTVQCLLDSGADINR), 196-226 (SGATPLYFACSHGQRDTAQILLLRGAKYLSD), and 228-253 (NGVTPLDLCVQGGYGETCEVLIQYHP). A disordered region spans residues 396 to 433 (KGQDQDGTSIPPFEPPGPGSYENLSTGTGESKPDVLGG). The HECT domain maps to 574-909 (NCAKLKQGIA…HCGSYGYTMA (336 aa)). Residue cysteine 876 is the Glycyl thioester intermediate of the active site.

In terms of assembly, homodimer. The homodimer is autoinhibited and stabilized by its N-terminal helix. Interacts with RAB1 (RAB1A, RAB1B or RAB1C), RAB4 (RAB4A or RAB4B) and RAB11 (RAB11A or RAB11B); in a GTP-dependent manner. Interacts with the 26S proteasomal complex through the 20S core proteasomal subunit. Interacts with RARB. Post-translationally, autoubiquitinated.

Its subcellular location is the golgi apparatus. It localises to the golgi stack membrane. It is found in the cytoplasm. The protein resides in the endoplasmic reticulum. The enzyme catalyses S-ubiquitinyl-[E2 ubiquitin-conjugating enzyme]-L-cysteine + [acceptor protein]-L-lysine = [E2 ubiquitin-conjugating enzyme]-L-cysteine + N(6)-ubiquitinyl-[acceptor protein]-L-lysine.. Its pathway is protein modification; protein ubiquitination. In terms of biological role, E3 ubiquitin-protein ligase involved in Golgi membrane fusion and regulation of small GTPases. Acts as a regulator of Golgi membrane dynamics during the cell cycle: recruited to Golgi membrane by Rab proteins and regulates postmitotic Golgi membrane fusion. Acts by mediating ubiquitination during mitotic Golgi disassembly, ubiquitination serving as a signal for Golgi reassembly later, after cell division. Specifically binds GTP-bound RAC1, mediating ubiquitination and subsequent degradation of active RAC1, thereby playing a role in host defense against pathogens. May also act as a transcription regulator via its interaction with RARB. This chain is E3 ubiquitin-protein ligase HACE1 (HACE1), found in Bos taurus (Bovine).